A 181-amino-acid polypeptide reads, in one-letter code: Adenine phosphoribosyltransferase (181 aa).

Belongs to the purine/pyrimidine phosphoribosyltransferase family. In terms of assembly, homodimer.

Its subcellular location is the cytoplasm. It catalyses the reaction AMP + diphosphate = 5-phospho-alpha-D-ribose 1-diphosphate + adenine. Its pathway is purine metabolism; AMP biosynthesis via salvage pathway; AMP from adenine: step 1/1. Catalyzes a salvage reaction resulting in the formation of AMP, that is energically less costly than de novo synthesis. The polypeptide is Adenine phosphoribosyltransferase (Chromohalobacter salexigens (strain ATCC BAA-138 / DSM 3043 / CIP 106854 / NCIMB 13768 / 1H11)).